A 216-amino-acid polypeptide reads, in one-letter code: uncharacterized protein (216 aa).

Residues 125 to 176 (YPKSTNFDSHYHDCDEYWVIIEGAGTVVVGSRSFEVEVGDCVAIGMGHHHDL) form the Cupin type-2 domain.

This is an uncharacterized protein from Sinorhizobium fredii (strain NBRC 101917 / NGR234).